We begin with the raw amino-acid sequence, 568 residues long: MASPALISETEAWKDLKAHLEGIKRTHLRELMGDTERCQSMMVEFDNIFLDYSRQQASSDTINKLYKLADAAHLKQKIDRMYNGDHINSTENRSVLHVALRAPRNSAICSDGKNVVPDVWNVLDKIKDFSDRVRNGSWIGATGKKLKDVIAVGIGGSFLGPLFVHTALQTDPEASKNARGRELRFLANVDPIDVARNISGLNPESTLVVVVSKTFTTAETMLNARTLREWISSALGPSAVAKHMVAVSTNLPLVEKFGIDPINAFAFWDWVGGRYSVCSAVGVLPLSLQYGFAVVEKFLQGAHSIDQHFSSASFEKNIPVLLGLLSVWNVSFLGYPARAILPYSQALEKLAPHIQQVSMESNGKGVSIDGLPLPFESGEIDFGEPGTNGQHSFYQLIHQGRVIPCDFIGVVKSQQPVYLKGEVVNNHDELMSNFFAQPDALAYGKTPEQLKKENVSEHLIPHKTFTGNRPSISILLPTLDGYRIGQLLAIYEHRVAVQGFVWGINSFDQWGVELGKSLATQVRKQLHASRVKGEPVEGFNFSTKTLLERYLEATSDVPADPSTLLPNI.

Residue Glu-360 is the Proton donor of the active site. Active-site residues include His-391 and Lys-516.

Belongs to the GPI family. Homodimer.

It localises to the cytoplasm. The enzyme catalyses alpha-D-glucose 6-phosphate = beta-D-fructose 6-phosphate. The protein operates within carbohydrate degradation; glycolysis; D-glyceraldehyde 3-phosphate and glycerone phosphate from D-glucose: step 2/4. The protein is Glucose-6-phosphate isomerase, cytosolic 1 (PGIC1) of Clarkia arcuata (Glandular clarkia).